A 182-amino-acid polypeptide reads, in one-letter code: ATP-dependent protease subunit HslV (182 aa).

Thr12 is a catalytic residue. Positions 167, 170, and 173 each coordinate Na(+).

Belongs to the peptidase T1B family. HslV subfamily. In terms of assembly, a double ring-shaped homohexamer of HslV is capped on each side by a ring-shaped HslU homohexamer. The assembly of the HslU/HslV complex is dependent on binding of ATP.

It is found in the cytoplasm. It carries out the reaction ATP-dependent cleavage of peptide bonds with broad specificity.. Allosterically activated by HslU binding. Protease subunit of a proteasome-like degradation complex believed to be a general protein degrading machinery. This chain is ATP-dependent protease subunit HslV, found in Chlorobium phaeobacteroides (strain DSM 266 / SMG 266 / 2430).